We begin with the raw amino-acid sequence, 767 residues long: Cadherin-5 (767 aa).

Positions methionine 1–glycine 29 are cleaved as a signal peptide. Positions valine 30–arginine 51 are excised as a propeptide. Residues valine 30 to serine 593 are Extracellular-facing. Ca(2+)-binding residues include glutamate 62, glutamate 63, aspartate 113, and glutamate 115. 5 consecutive Cadherin domains span residues arginine 86–phenylalanine 155, phenylalanine 155–phenylalanine 261, lysine 262–phenylalanine 373, asparagine 374–leucine 475, and leucine 475–tyrosine 581. Asparagine 121 is a glycosylation site (N-linked (GlcNAc...) asparagine). Aspartate 147, isoleucine 148, asparagine 149, aspartate 150, asparagine 151, aspartate 180, and aspartate 182 together coordinate Ca(2+). Asparagine 197 carries N-linked (GlcNAc...) asparagine glycosylation. Aspartate 233 provides a ligand contact to Ca(2+). Asparagine 374, asparagine 477, and asparagine 518 each carry an N-linked (GlcNAc...) asparagine glycan. The helical transmembrane segment at alanine 594–leucine 614 threads the bilayer. Residues arginine 615 to tyrosine 767 lie on the Cytoplasmic side of the membrane.

The protein resides in the cell membrane. It is found in the cell junction. The protein localises to the adherens junction. Its function is as follows. Cadherins are calcium-dependent cell adhesion proteins. They preferentially interact with themselves in a homophilic manner in connecting cells; cadherins may thus contribute to the sorting of heterogeneous cell types. Required for embryonic cardiac looping and heart chamber development, via promotion of cell-cell junction formation and subsequent attachment between the endothelial and myocardial layers of the heart. Required for the directional migration and delamination of endothelial cell monolayers, by which common cardinal veins form via the lumen ensheathment mechanism of vessel development as they migrate and connect with the heart inflow tract. Required for the formation of filopodia extensions (sprouts) at the initiation of intersegmental vessel development, by acting (via its C-terminus) to facilitate anchoring of the actin cytoskeleton to cell junctions in endothelial cells. Then positively regulates dorsal migration of stalk cells and sprout outgrowth towards the dorsal longitudinal anastomotic vessels (DLAV) via endothelial cell elongation. Following contact with the DLAV, required for intersegmental vessel lumen formation, potentially via facilitating the formation and/or extension of endothelial cell tight junctions that are required during tubulogenesis. The chain is Cadherin-5 from Danio rerio (Zebrafish).